Here is an 81-residue protein sequence, read N- to C-terminus: Acyl carrier protein 2 (81 aa).

Residues 1–79 (MTETEILERI…DVIGAVQSLL (79 aa)) form the Carrier domain. Ser39 carries the O-(pantetheine 4'-phosphoryl)serine modification.

Belongs to the acyl carrier protein (ACP) family. In terms of processing, 4'-phosphopantetheine is transferred from CoA to a specific serine of apo-ACP by AcpS. This modification is essential for activity because fatty acids are bound in thioester linkage to the sulfhydryl of the prosthetic group.

The protein resides in the cytoplasm. It participates in lipid metabolism; fatty acid biosynthesis. Its function is as follows. Carrier of the growing fatty acid chain in fatty acid biosynthesis. The protein is Acyl carrier protein 2 of Ralstonia nicotianae (strain ATCC BAA-1114 / GMI1000) (Ralstonia solanacearum).